Reading from the N-terminus, the 321-residue chain is Nucleotide-binding protein GOX0815 (321 aa).

27–34 (GLSGAGKS) lines the ATP pocket. GTP is bound at residue 72–75 (DVRS).

The protein belongs to the RapZ-like family.

Displays ATPase and GTPase activities. The protein is Nucleotide-binding protein GOX0815 of Gluconobacter oxydans (strain 621H) (Gluconobacter suboxydans).